We begin with the raw amino-acid sequence, 459 residues long: Argininosuccinate lyase (459 aa).

It belongs to the lyase 1 family. Argininosuccinate lyase subfamily.

Its subcellular location is the cytoplasm. It carries out the reaction 2-(N(omega)-L-arginino)succinate = fumarate + L-arginine. It functions in the pathway amino-acid biosynthesis; L-arginine biosynthesis; L-arginine from L-ornithine and carbamoyl phosphate: step 3/3. This is Argininosuccinate lyase from Staphylococcus aureus (strain Mu3 / ATCC 700698).